Consider the following 410-residue polypeptide: Serine/threonine transporter SstT (410 aa).

10 helical membrane passes run 15-35 (GSLV…AWLS), 49-69 (FVNA…ISSI), 82-102 (PIVM…VVAS), 118-138 (IVPP…MVTN), 142-162 (AVMK…GFAF), 190-210 (FAPV…GFDA), 217-237 (LLGL…PLLV), 299-319 (MAGA…TLGI), 331-351 (LVAS…LLLI), and 358-378 (FGIP…IGVL).

Belongs to the dicarboxylate/amino acid:cation symporter (DAACS) (TC 2.A.23) family.

It is found in the cell inner membrane. The catalysed reaction is L-serine(in) + Na(+)(in) = L-serine(out) + Na(+)(out). It catalyses the reaction L-threonine(in) + Na(+)(in) = L-threonine(out) + Na(+)(out). Functionally, involved in the import of serine and threonine into the cell, with the concomitant import of sodium (symport system). The sequence is that of Serine/threonine transporter SstT from Erwinia tasmaniensis (strain DSM 17950 / CFBP 7177 / CIP 109463 / NCPPB 4357 / Et1/99).